The primary structure comprises 113 residues: UPF0482 protein YnfB (113 aa).

Positions 1–28 (MKITLSKRIGLLAILLPCALALSTTVHA) are cleaved as a signal peptide.

Belongs to the UPF0482 family.

The chain is UPF0482 protein YnfB from Escherichia coli O8 (strain IAI1).